We begin with the raw amino-acid sequence, 245 residues long: MMKKRVKRVLFKISGEALSDGDSSNRISEERLSRLIAELKVVRNADVEVALVIGGGNILRGLSQSQSLQINRVSADQMGMLATLINGMALADALKTEDVPNLLTSTLSCPQLAELYNPQKASDALSQGKVVICTMGAGAPYLTTDTGAALRACELKVDVLLKATMHVDGVYDQDPRECADAVRYDHISYRDFLSQGLGAIDPAAISLCMEAGIPIKMFSFARHSLEEAVFNTVGTVISSTEGGQL.

12 to 15 serves as a coordination point for ATP; the sequence is KISG. Residue Gly55 coordinates UMP. Positions 56 and 60 each coordinate ATP. UMP-binding positions include Asp76 and 137-144; that span reads AGAPYLTT. Residues Thr164, Tyr171, and Asp174 each coordinate ATP.

It belongs to the UMP kinase family. Homohexamer.

It localises to the cytoplasm. It catalyses the reaction UMP + ATP = UDP + ADP. Its pathway is pyrimidine metabolism; CTP biosynthesis via de novo pathway; UDP from UMP (UMPK route): step 1/1. With respect to regulation, inhibited by UTP. Functionally, catalyzes the reversible phosphorylation of UMP to UDP. This Chlamydia trachomatis serovar D (strain ATCC VR-885 / DSM 19411 / UW-3/Cx) protein is Uridylate kinase.